The sequence spans 290 residues: Translin-associated protein X (290 aa).

Residues 1–31 form a disordered region; sequence MNGKEGPGGFRKRKHDTFPHNQRREGKDASL. Over residues 16 to 28 the composition is skewed to basic and acidic residues; the sequence is DTFPHNQRREGKD. The interval 73–208 is interaction with C1D; that stretch reads LLHRITSAPD…MRMCINSVGN (136 aa). Residues Glu129 and Glu197 each coordinate Mg(2+). Lys279 is covalently cross-linked (Glycyl lysine isopeptide (Lys-Gly) (interchain with G-Cter in SUMO2)).

The protein belongs to the translin family. In terms of assembly, ring-shaped heterooctamer of six TSN and two TSNAX subunits. Interacts with GOLGA3, TSNAXIP1, SUN1 and AKAP9. Interacts with the homodimeric form of C1D following gamma-radiation. Interacts with TSN and C1D in a mutually exclusive manner. In terms of processing, sumoylated with SUMO1. As to expression, detected in heart, brain, lung, liver, kidney and testis.

The protein localises to the cytoplasm. Its subcellular location is the perinuclear region. It is found in the golgi apparatus. The protein resides in the nucleus. Its function is as follows. Acts in combination with TSN as an endonuclease involved in the activation of the RNA-induced silencing complex (RISC). Possible role in spermatogenesis. This is Translin-associated protein X (Tsnax) from Mus musculus (Mouse).